The following is a 267-amino-acid chain: DNA repair protein RecO (267 aa).

Belongs to the RecO family.

Involved in DNA repair and RecF pathway recombination. The chain is DNA repair protein RecO from Moorella thermoacetica (strain ATCC 39073 / JCM 9320).